Reading from the N-terminus, the 188-residue chain is Transcription factor FapR (188 aa).

Belongs to the FapR family.

Transcriptional factor involved in regulation of membrane lipid biosynthesis by repressing genes involved in fatty acid and phospholipid metabolism. The protein is Transcription factor FapR of Bacillus velezensis (strain DSM 23117 / BGSC 10A6 / LMG 26770 / FZB42) (Bacillus amyloliquefaciens subsp. plantarum).